Consider the following 230-residue polypeptide: UPF0758 protein ABC2615 (230 aa).

One can recognise an MPN domain in the interval 104–226; sequence VISSPEDAAE…FISLKERGFF (123 aa). The Zn(2+) site is built by histidine 175, histidine 177, and aspartate 188. The JAMM motif signature appears at 175 to 188; the sequence is HNHPSGDPSPSPED.

This sequence belongs to the UPF0758 family.

The protein is UPF0758 protein ABC2615 of Shouchella clausii (strain KSM-K16) (Alkalihalobacillus clausii).